A 200-amino-acid chain; its full sequence is A-type ATP synthase subunit E (200 aa).

It belongs to the V-ATPase E subunit family. Has multiple subunits with at least A(3), B(3), C, D, E, F, H, I and proteolipid K(x).

Its subcellular location is the cell membrane. Functionally, component of the A-type ATP synthase that produces ATP from ADP in the presence of a proton gradient across the membrane. The sequence is that of A-type ATP synthase subunit E from Methanopyrus kandleri (strain AV19 / DSM 6324 / JCM 9639 / NBRC 100938).